Reading from the N-terminus, the 386-residue chain is Putative prophage major tail sheath protein (386 aa).

This sequence belongs to the myoviridae tail sheath protein family.

It is found in the secreted. The chain is Putative prophage major tail sheath protein from Pseudomonas aeruginosa (strain UCBPP-PA14).